Consider the following 151-residue polypeptide: Transcriptional repressor NrdR (151 aa).

The segment at 3–34 (CPFCHNDQSRVIDSRVIDSGSAIRRRRECTQC) is a zinc-finger region. In terms of domain architecture, ATP-cone spans 46–136 (LLVVKRNGLT…VYKSFESADD (91 aa)).

Belongs to the NrdR family. Zn(2+) is required as a cofactor.

Negatively regulates transcription of bacterial ribonucleotide reductase nrd genes and operons by binding to NrdR-boxes. In Corynebacterium diphtheriae (strain ATCC 700971 / NCTC 13129 / Biotype gravis), this protein is Transcriptional repressor NrdR.